A 230-amino-acid chain; its full sequence is Intracellular hyphae protein 1 (230 aa).

The signal sequence occupies residues 1–18 (MQTSFVALLAVAASLASA). Residues 20-102 (PHGGNSYEAS…KNNTLPVPTC (83 aa)) form a disordered region. Repeat copies occupy residues 30–33 (LPEP), 36–39 (LPEP), 42–45 (LPEP), 46–49 (VEGP), 50–53 (YKPK), 57–60 (LPEP), 65–68 (YKPK), 76–79 (VEGP), 80–83 (YKPK), and 84–87 (LPEP). Positions 30-87 (LPEPTNLPEPTKLPEPVEGPYKPKPPILPEPIKDNYKPKTPILPEHVEGPYKPKLPEP) are 5 X 4 AA repeats of L-P-E-P. The 2 X 4 AA repeats of V-E-G-P stretch occupies residues 46 to 87 (VEGPYKPKPPILPEPIKDNYKPKTPILPEHVEGPYKPKLPEP). The tract at residues 50-83 (YKPKPPILPEPIKDNYKPKTPILPEHVEGPYKPK) is 3 X 4 AA repeats of Y-K-P-K. Basic and acidic residues predominate over residues 74 to 84 (EHVEGPYKPKL). Asn-94 is a glycosylation site (N-linked (GlcNAc...) asparagine). Residues 108–152 (KTHKVKSGESLTTIAEKYDTGICNIAKLNNLADPNFVDLNQDLQI) form the LysM 1 domain. The N-linked (GlcNAc...) asparagine glycan is linked to Asn-161. A LysM 2 domain is found at 183–227 (DIYSVVSGDTLTSIAQALQITLQSLKDANPGVVPEHLNVGQKLNV).

In terms of assembly, forms a multimeric structure. N-glycosylated and may be O-glycosylated. In terms of tissue distribution, expressed in penetration hyphae, infection vesicles and primary hyphae (intracellular hyphae).

The protein resides in the secreted. Its subcellular location is the cell wall. Its function is as follows. May have roles in host-pathogen interaction, including establishment and maintenance of biotrophy, prevention of host recognition of the fungus and a barrier to host defense molecules. This chain is Intracellular hyphae protein 1 (CIH1), found in Colletotrichum lindemuthianum (Bean anthracnose fungus).